Consider the following 88-residue polypeptide: Large ribosomal subunit protein eL20 (88 aa).

The protein belongs to the eukaryotic ribosomal protein eL20 family. In terms of assembly, part of the 50S ribosomal subunit. Binds 23S rRNA.

The sequence is that of Large ribosomal subunit protein eL20 from Aeropyrum pernix (strain ATCC 700893 / DSM 11879 / JCM 9820 / NBRC 100138 / K1).